The primary structure comprises 643 residues: Protein RTF1 homolog (643 aa).

Disordered stretches follow at residues Met1–Glu107 and Ile124–Pro262. Gly2 carries the N-acetylglycine modification. The span at Lys65–Arg77 shows a compositional bias: basic and acidic residues. The residue at position 87 (Ser87) is a Phosphoserine. Positions Ile124–Thr157 are enriched in basic and acidic residues. Positions Ala162–Arg171 are enriched in low complexity. The span at Ser172–Ala188 shows a compositional bias: basic and acidic residues. Low complexity predominate over residues Ser225–Asp235. In terms of domain architecture, Plus3 spans Val261–Ser396.

As to quaternary structure, component of the nuclear PAF1 complex (PAF1C), which consists of VIP2/ELF7/PAF1, VIP3/SKI8/WDR61, VIP4/LEO1, VIP5/RTF1, VIP6/ELF8/CTR9 and CDC73.

Its subcellular location is the nucleus. Component of the PAF1 complex (PAF1C) which is involved in histone modifications such as methylation on histone H3 'Lys-4' (H3K4me3). Involved in regulation of flowering time. Required for the expression of the flowering repressors and FLC and MADS-box genes of the MAF family. Involved in the control of seed dormancy and germination. This is Protein RTF1 homolog from Arabidopsis thaliana (Mouse-ear cress).